Here is a 287-residue protein sequence, read N- to C-terminus: MKSLKELSLRIKNIRSVQKTTKIMQMVSAAKLLQSQKKLSNSKLYISKLHSIISSLMLSVDQELLAKILNVSNNGSYLVFIVASDRGLCGNFNSSIVKFSQNKLITNGKKVDIVFLGKKAFDIGKNRFDSKSILKIENSKGITLKHVEALVGGIDLSKYDKVKVFYSKFYNTFTQKPMLETIKPWSKDSSLIDNSLAGPITDYGYEYEPQNIEFILKSLVQDYVVIALYSALLESATSENSARMVAMESANRNTKEILNKLALLYNRSRQAAITTDLIEVIGGAESL.

Belongs to the ATPase gamma chain family. As to quaternary structure, F-type ATPases have 2 components, CF(1) - the catalytic core - and CF(0) - the membrane proton channel. CF(1) has five subunits: alpha(3), beta(3), gamma(1), delta(1), epsilon(1). CF(0) has three main subunits: a, b and c.

Its subcellular location is the cell membrane. Its function is as follows. Produces ATP from ADP in the presence of a proton gradient across the membrane. The gamma chain is believed to be important in regulating ATPase activity and the flow of protons through the CF(0) complex. This is ATP synthase gamma chain from Wolbachia sp. subsp. Drosophila simulans (strain wRi).